Reading from the N-terminus, the 131-residue chain is Profilin-5 (131 aa).

Cysteines 13 and 115 form a disulfide. The short motif at 81-97 (AVIRGKKGAGGITIKKT) is the Involved in PIP2 interaction element. Thr111 is subject to Phosphothreonine.

The protein belongs to the profilin family. As to quaternary structure, occurs in many kinds of cells as a complex with monomeric actin in a 1:1 ratio. In terms of processing, phosphorylated by MAP kinases.

Its subcellular location is the cytoplasm. It is found in the cytoskeleton. Functionally, binds to actin and affects the structure of the cytoskeleton. At high concentrations, profilin prevents the polymerization of actin, whereas it enhances it at low concentrations. The polypeptide is Profilin-5 (Olea europaea (Common olive)).